The chain runs to 156 residues: Ribosome maturation factor RimP (156 aa).

Belongs to the RimP family.

It localises to the cytoplasm. In terms of biological role, required for maturation of 30S ribosomal subunits. The polypeptide is Ribosome maturation factor RimP (Halalkalibacterium halodurans (strain ATCC BAA-125 / DSM 18197 / FERM 7344 / JCM 9153 / C-125) (Bacillus halodurans)).